Reading from the N-terminus, the 118-residue chain is Large ribosomal subunit protein uL18 (118 aa).

This sequence belongs to the universal ribosomal protein uL18 family. Part of the 50S ribosomal subunit; part of the 5S rRNA/L5/L18/L25 subcomplex. Contacts the 5S and 23S rRNAs.

Functionally, this is one of the proteins that bind and probably mediate the attachment of the 5S RNA into the large ribosomal subunit, where it forms part of the central protuberance. The polypeptide is Large ribosomal subunit protein uL18 (Cupriavidus pinatubonensis (strain JMP 134 / LMG 1197) (Cupriavidus necator (strain JMP 134))).